The sequence spans 317 residues: R-spondin-3 (317 aa).

An N-terminal signal peptide occupies residues 1–20 (MQLQLISIVLILHFMEYTNC). FU repeat units lie at residues 34–86 (SGVS…GFYG), 92–135 (RNDC…GLVP), and 139–183 (KKEC…EFEP). 11 cysteine pairs are disulfide-bonded: C41/C48, C45/C54, C57/C76, C80/C95, C98/C105, C102/C111, C114/C125, C129/C189, C195/C237, C206/C213, and C246/C253. Residue N184 is glycosylated (N-linked (GlcNAc...) asparagine). One can recognise a TSP type-1 domain in the interval 194–254 (HCEVSEWSEW…ECFVKKKRCK (61 aa)). A compositionally biased stretch (basic residues) spans 251-268 (KRCKPPKGQRRGEKKKRF). The disordered stretch occupies residues 251-317 (KRCKPPKGQR…RDQSRDAGTV (67 aa)). Residues 274-303 (VTAEARRERKREREKETIDREESENRNKTE) are compositionally biased toward basic and acidic residues. An N-linked (GlcNAc...) asparagine glycan is attached at N300.

It belongs to the R-spondin family. In terms of assembly, binds heparin.

Its subcellular location is the secreted. In terms of biological role, activator of the canonical Wnt signaling pathway by acting as a ligand for lgr4-6 receptors, which acts as a key regulator of angiogenesis. Upon binding to lgr4-6 (lgr4, lgr5 or lgr6), lgr4-6 associate with phosphorylated lrp6 and frizzled receptors that are activated by extracellular Wnt receptors, triggering the canonical Wnt signaling pathway to increase expression of target genes. Acts both in the canonical. Wnt/beta-catenin-dependent pathway and in non-canonical Wnt signaling pathway. Acts as a key regulator of angiogenesis by controlling vascular stability and pruning: acts by activating the non-canonical Wnt signaling pathway in endothelial cells. Can also amplify Wnt signaling pathway independently of LGR4-6 receptors, possibly by acting as a direct antagonistic ligand to RNF43 and ZNRF3. This chain is R-spondin-3 (rspo3), found in Danio rerio (Zebrafish).